Reading from the N-terminus, the 152-residue chain is Ribonuclease pancreatic (152 aa).

The first 24 residues, 1 to 24 (MALDKSVILLPLLVLVLLVLGCLG), serve as a signal peptide directing secretion. Positions 31 and 34 each coordinate substrate. His-36 serves as the catalytic Proton acceptor. N-linked (GlcNAc...) asparagine glycosylation is present at Asn-46. Intrachain disulfides connect Cys-50–Cys-108, Cys-64–Cys-119, Cys-82–Cys-134, and Cys-89–Cys-96. Residues 65-69 (KPVNT), Lys-90, and Arg-109 each bind substrate. The N-linked (GlcNAc...) asparagine glycan is linked to Asn-112. The active-site Proton donor is His-143.

Belongs to the pancreatic ribonuclease family. Monomer. Interacts with and forms tight 1:1 complexes with RNH1. Dimerization of two such complexes may occur. Interaction with RNH1 inhibits this protein.

It is found in the secreted. It carries out the reaction an [RNA] containing cytidine + H2O = an [RNA]-3'-cytidine-3'-phosphate + a 5'-hydroxy-ribonucleotide-3'-[RNA].. The enzyme catalyses an [RNA] containing uridine + H2O = an [RNA]-3'-uridine-3'-phosphate + a 5'-hydroxy-ribonucleotide-3'-[RNA].. Its function is as follows. Endonuclease that catalyzes the cleavage of RNA on the 3' side of pyrimidine nucleotides. Acts on single-stranded and double-stranded RNA. The protein is Ribonuclease pancreatic (RNASE1) of Miopithecus talapoin (Angolan talapoin).